The chain runs to 238 residues: Ribonuclease PH (238 aa).

Phosphate is bound by residues arginine 86 and 124-126 (GTR).

It belongs to the RNase PH family. In terms of assembly, homohexameric ring arranged as a trimer of dimers.

The catalysed reaction is tRNA(n+1) + phosphate = tRNA(n) + a ribonucleoside 5'-diphosphate. In terms of biological role, phosphorolytic 3'-5' exoribonuclease that plays an important role in tRNA 3'-end maturation. Removes nucleotide residues following the 3'-CCA terminus of tRNAs; can also add nucleotides to the ends of RNA molecules by using nucleoside diphosphates as substrates, but this may not be physiologically important. Probably plays a role in initiation of 16S rRNA degradation (leading to ribosome degradation) during starvation. The protein is Ribonuclease PH of Brucella anthropi (strain ATCC 49188 / DSM 6882 / CCUG 24695 / JCM 21032 / LMG 3331 / NBRC 15819 / NCTC 12168 / Alc 37) (Ochrobactrum anthropi).